A 268-amino-acid chain; its full sequence is 4-diphosphocytidyl-2-C-methyl-D-erythritol kinase (268 aa).

K9 is an active-site residue. 88–98 (PPGAGLGGGSS) serves as a coordination point for ATP. Residue D130 is part of the active site.

Belongs to the GHMP kinase family. IspE subfamily.

It catalyses the reaction 4-CDP-2-C-methyl-D-erythritol + ATP = 4-CDP-2-C-methyl-D-erythritol 2-phosphate + ADP + H(+). It functions in the pathway isoprenoid biosynthesis; isopentenyl diphosphate biosynthesis via DXP pathway; isopentenyl diphosphate from 1-deoxy-D-xylulose 5-phosphate: step 3/6. Functionally, catalyzes the phosphorylation of the position 2 hydroxy group of 4-diphosphocytidyl-2C-methyl-D-erythritol. This Aquifex aeolicus (strain VF5) protein is 4-diphosphocytidyl-2-C-methyl-D-erythritol kinase.